We begin with the raw amino-acid sequence, 55 residues long: Large ribosomal subunit protein bL33 (55 aa).

It belongs to the bacterial ribosomal protein bL33 family.

This is Large ribosomal subunit protein bL33 from Buchnera aphidicola subsp. Acyrthosiphon pisum (strain 5A).